An 83-amino-acid polypeptide reads, in one-letter code: MRALYPESFKSKVAMYSGAWCGCRPRTRQLSGRLGRGTCGGRQPASRSADFSCECVLLLPLQDPSLLPQKLGLFAGTLVRLSP.

Cationic antimicrobial peptide that exhibits a potent and broad-spectrum antimicrobial activity against both bacteria and fungi, as well as against the multidrug-resistant bacteria P.aeruginosa. Exhibits rapid bactericidal kinetic. Acts by destroying the integrity of bacterial membranes, leading to bacterial death. Also exhibits potent anti-biofilm activity against P.aeruginosa. Shows high thermal stability and ion tolerance, as it maintains antibacterial activity even when heated to 100 degrees Celsius for 30 minutes and in presence of high levels of NaCl, CaCl(2) and MgCl(2). Does not show cytotoxicity and hemolytic activity. In a mouse model of burn infection, exhibits a remarkably reduction in the bacterial load caused by multidrug-resistant P.aeruginosa at the site of infection, and promotes wound healing. In Scylla paramamosain (Mud crab), this protein is Scyreptin.